Here is a 69-residue protein sequence, read N- to C-terminus: Large ribosomal subunit protein uL29 (69 aa).

The protein belongs to the universal ribosomal protein uL29 family.

In Staphylococcus aureus (strain Mu3 / ATCC 700698), this protein is Large ribosomal subunit protein uL29.